The sequence spans 466 residues: tRNA-2-methylthio-N(6)-dimethylallyladenosine synthase (466 aa).

The 121-residue stretch at 3-123 (KKLYIKTYGC…LPEMVARAVR (121 aa)) folds into the MTTase N-terminal domain. Residues C12, C48, C86, C162, C166, and C169 each contribute to the [4Fe-4S] cluster site. The Radical SAM core domain maps to 148-381 (SPAGPSAFLS…QQLLTAQQTA (234 aa)). Positions 384–446 (TACVGRVQPV…ANSLSGTVVV (63 aa)) constitute a TRAM domain.

The protein belongs to the methylthiotransferase family. MiaB subfamily. As to quaternary structure, monomer. [4Fe-4S] cluster is required as a cofactor.

The protein resides in the cytoplasm. It catalyses the reaction N(6)-dimethylallyladenosine(37) in tRNA + (sulfur carrier)-SH + AH2 + 2 S-adenosyl-L-methionine = 2-methylsulfanyl-N(6)-dimethylallyladenosine(37) in tRNA + (sulfur carrier)-H + 5'-deoxyadenosine + L-methionine + A + S-adenosyl-L-homocysteine + 2 H(+). Its function is as follows. Catalyzes the methylthiolation of N6-(dimethylallyl)adenosine (i(6)A), leading to the formation of 2-methylthio-N6-(dimethylallyl)adenosine (ms(2)i(6)A) at position 37 in tRNAs that read codons beginning with uridine. The chain is tRNA-2-methylthio-N(6)-dimethylallyladenosine synthase from Rhodospirillum centenum (strain ATCC 51521 / SW).